Here is a 176-residue protein sequence, read N- to C-terminus: Disulfide bond formation protein B (176 aa).

Over 1–14 the chain is Cytoplasmic; sequence MLRFLNQCSQGRGA. The chain crosses the membrane as a helical span at residues 15 to 31; that stretch reads WLLMAFTALALELTALW. Over 32 to 49 the chain is Periplasmic; it reads FQHVMLLKPCVLCIYERC. Cys-41 and Cys-44 are joined by a disulfide. The chain crosses the membrane as a helical span at residues 50–65; the sequence is ALFGVLGAALIGAIAP. Residues 66–71 lie on the Cytoplasmic side of the membrane; it reads KTPLRY. A helical transmembrane segment spans residues 72 to 89; it reads VAMVIWLYSAFRGVQLTY. The Periplasmic segment spans residues 90–144; the sequence is EHTMLQLYPSPFATCDFMVRFPEWLPLDKWVPQVFVASGDCAERQWDFLGLEMPQ. An intrachain disulfide couples Cys-104 to Cys-130. A helical membrane pass occupies residues 145–163; the sequence is WLLGIFIAYLIVAVLVMIS. Residues 164-176 are Cytoplasmic-facing; it reads QPFKAKKRDLFGR.

It belongs to the DsbB family.

The protein resides in the cell inner membrane. In terms of biological role, required for disulfide bond formation in some periplasmic proteins. Acts by oxidizing the DsbA protein. The polypeptide is Disulfide bond formation protein B (Shigella sonnei (strain Ss046)).